A 215-amino-acid polypeptide reads, in one-letter code: Small ribosomal subunit protein eS1 (215 aa).

It belongs to the eukaryotic ribosomal protein eS1 family.

The polypeptide is Small ribosomal subunit protein eS1 (Thermoplasma volcanium (strain ATCC 51530 / DSM 4299 / JCM 9571 / NBRC 15438 / GSS1)).